A 2410-amino-acid polypeptide reads, in one-letter code: Reducing polyketide synthase FUB1 (2410 aa).

The segment covering 1-42 has biased composition (low complexity); the sequence is MTLSNGSNGANGTSNGNGAHPSANGFHNAANGGANNGSANGG. Residues 1-52 form a disordered region; the sequence is MTLSNGSNGANGTSNGNGAHPSANGFHNAANGGANNGSANGGAEHDAGRPQV. The Ketosynthase family 3 (KS3) domain occupies 57-479; the sequence is SSAIAVIGVS…GANAHAVLDD (423 aa). Residues C230, H365, and H403 each act as for beta-ketoacyl synthase activity in the active site. A malonyl-CoA:ACP transacylase (MAT) domain region spans residues 608–929; the sequence is TFIFTGQGAQ…FSAIKRKQDA (322 aa). The active-site For malonyltransferase activity is the S699. Positions 994–1127 are N-terminal hotdog fold; sequence LELLGVRDPR…GLVSTSYKHD (134 aa). The 314-residue stretch at 994–1307 folds into the PKS/mFAS DH domain; it reads LELLGVRDPR…TVPLRGASDS (314 aa). Residues 995-1302 are dehydratase (DH) domain; that stretch reads ELLGVRDPRS…LKGCKTVPLR (308 aa). H1026 serves as the catalytic Proton acceptor; for dehydratase activity. The interval 1155 to 1307 is C-terminal hotdog fold; sequence LPSVDPTVFY…TVPLRGASDS (153 aa). D1220 functions as the Proton donor; for dehydratase activity in the catalytic mechanism. Residues 1714-2026 form an enoyl reductase (ER) domain region; it reads GLLDTLEYLS…SGGHVGKIVL (313 aa). Residues 2050–2226 are ketoreductase (KR) domain; it reads ATYVLIGGLG…AATSINLSLV (177 aa). In terms of domain architecture, Carrier spans 2329-2406; it reads EVYEIVLQQL…GFTKKVMAKS (78 aa). An O-(pantetheine 4'-phosphoryl)serine modification is found at S2366.

Its pathway is mycotoxin biosynthesis. Reducing polyketide synthase; part of the gene cluster that mediates the biosynthesis of fusaric acid, a mycotoxin with low to moderate toxicity to animals and humans, but with high phytotoxic properties. L-aspartate is suggested as fusaric acid amino acid precursor that is activated and further processed to O-acetyl-L-homoserine by cluster enzymes aspartate kinase FUB3 and homoserine O-acetyltransferase FUB5, as well as enzymes of the primary metabolism. The polyketide synthase (PKS) FUB1 generates the triketide trans-2-hexenal which is presumptively released by the hydrolase FUB4 and linked to the NRPS-bound amino acid precursor by NAD(P)-dependent dehydrogenase FUB6. FUB1, FUB4, and the non-canonical NRPS Fub8 may form an enzyme complex. Further processing of the NRPS-bound intermediate might be carried out by FUB6 and the sulfhydrylase FUB7, enabling a spontaneous electrocyclization to close the carbon backbone of fusaric acid. Dihydrofusaric acid is likely to be released via reduction by the thioester reductase (TR) domain of FUB8 whereupon the final oxidation to fusaric acid may (also) be performed by the FMN-dependent dehydrogenase FUB9. The polypeptide is Reducing polyketide synthase FUB1 (Gibberella fujikuroi (strain CBS 195.34 / IMI 58289 / NRRL A-6831) (Bakanae and foot rot disease fungus)).